The chain runs to 58 residues: UPF0391 membrane protein Sden_3712 (58 aa).

The next 2 membrane-spanning stretches (helical) occupy residues Leu-6–Ala-26 and Ala-27–Val-47.

The protein belongs to the UPF0391 family.

It is found in the cell membrane. This chain is UPF0391 membrane protein Sden_3712, found in Shewanella denitrificans (strain OS217 / ATCC BAA-1090 / DSM 15013).